Consider the following 258-residue polypeptide: tRNA pseudouridine synthase A (258 aa).

Catalysis depends on Asp-61, which acts as the Nucleophile. Residue Tyr-119 coordinates substrate.

Belongs to the tRNA pseudouridine synthase TruA family. In terms of assembly, homodimer.

The enzyme catalyses uridine(38/39/40) in tRNA = pseudouridine(38/39/40) in tRNA. In terms of biological role, formation of pseudouridine at positions 38, 39 and 40 in the anticodon stem and loop of transfer RNAs. This Chlorobium phaeobacteroides (strain DSM 266 / SMG 266 / 2430) protein is tRNA pseudouridine synthase A.